A 391-amino-acid polypeptide reads, in one-letter code: Na(+)/H(+) antiporter NhaA (391 aa).

Helical transmembrane passes span 14-34 (AGGI…NSPL), 47-67 (FGMS…FLLI), 87-107 (IFPA…YVAF), 117-137 (GWAI…ALLG), 146-166 (VFLL…IALF), 171-191 (LSTM…MLNA), 205-225 (AILW…GVVI), 252-272 (VAFG…LEGV), 280-300 (MLPL…IFTF), 318-338 (FIHI…SIFI), and 356-376 (LGIL…LHFS).

Belongs to the NhaA Na(+)/H(+) (TC 2.A.33) antiporter family.

The protein resides in the cell inner membrane. The catalysed reaction is Na(+)(in) + 2 H(+)(out) = Na(+)(out) + 2 H(+)(in). Its function is as follows. Na(+)/H(+) antiporter that extrudes sodium in exchange for external protons. The protein is Na(+)/H(+) antiporter NhaA of Vibrio campbellii (strain ATCC BAA-1116).